Consider the following 533-residue polypeptide: D-3-phosphoglycerate dehydrogenase (533 aa).

Alanine 2 is modified (N-acetylalanine). Position 14 is a phosphoserine (serine 14). Position 58 is an N6-acetyllysine (lysine 58). Residues threonine 78, 155 to 156 (RI), aspartate 175, threonine 207, 234 to 236 (CAR), and aspartate 260 contribute to the NAD(+) site. Threonine 78 bears the Phosphothreonine mark. Residue arginine 236 is part of the active site. Residue glutamate 265 is part of the active site. Catalysis depends on histidine 283, which acts as the Proton donor. Residue 283 to 286 (HLGA) participates in NAD(+) binding.

The protein belongs to the D-isomer specific 2-hydroxyacid dehydrogenase family. As to quaternary structure, homotetramer.

The catalysed reaction is (2R)-3-phosphoglycerate + NAD(+) = 3-phosphooxypyruvate + NADH + H(+). The enzyme catalyses (R)-2-hydroxyglutarate + NAD(+) = 2-oxoglutarate + NADH + H(+). It carries out the reaction (S)-malate + NAD(+) = oxaloacetate + NADH + H(+). It functions in the pathway amino-acid biosynthesis; L-serine biosynthesis; L-serine from 3-phospho-D-glycerate: step 1/3. Catalyzes the reversible oxidation of 3-phospho-D-glycerate to 3-phosphonooxypyruvate, the first step of the phosphorylated L-serine biosynthesis pathway. Also catalyzes the reversible oxidation of 2-hydroxyglutarate to 2-oxoglutarate and the reversible oxidation of (S)-malate to oxaloacetate. The polypeptide is D-3-phosphoglycerate dehydrogenase (PHGDH) (Sus scrofa (Pig)).